A 386-amino-acid chain; its full sequence is Enoyl-[acyl-carrier-protein] reductase 2, mitochondrial (386 aa).

The transit peptide at methionine 1 to threonine 22 directs the protein to the mitochondrion. Tyrosine 79 serves as the catalytic Proton donor. Residues asparagine 172, threonine 199–valine 202, arginine 222–arginine 224, tyrosine 296–methionine 299, phenylalanine 321–valine 323, and lysine 381 each bind NADP(+).

This sequence belongs to the zinc-containing alcohol dehydrogenase family. Quinone oxidoreductase subfamily. As to quaternary structure, homodimer and heterodimer with ETR1.

It is found in the mitochondrion. The catalysed reaction is a 2,3-saturated acyl-[ACP] + NADP(+) = a (2E)-enoyl-[ACP] + NADPH + H(+). In terms of biological role, required for respiration and the maintenance of the mitochondrial compartment. Oxidoreductase with a preference for short and medium chain substrates, including trans-2-hexenoyl-CoA (C6), trans-2-decenoyl-CoA (C10), and trans-2-hexadecenoyl-CoA (C16). May play a role in mitochondrial fatty acid synthesis. The sequence is that of Enoyl-[acyl-carrier-protein] reductase 2, mitochondrial (ETR2) from Candida tropicalis (Yeast).